Here is a 473-residue protein sequence, read N- to C-terminus: Photosystem II CP43 reaction center protein (473 aa).

A propeptide spanning residues 1 to 14 is cleaved from the precursor; that stretch reads MKTLYSLRRFYPVE. At Thr15 the chain carries N-acetylthreonine. Phosphothreonine is present on Thr15. 5 consecutive transmembrane segments (helical) span residues 69-93, 134-155, 178-200, 255-275, and 291-312; these read LFEV…PHLA, LLGP…KDRN, KALY…RKIT, KPFA…LSYS, and WFNN…ASQA. Glu367 is a binding site for [CaMn4O5] cluster. A helical membrane pass occupies residues 447 to 471; it reads RARAAAAGFEKGIDRDFEPVLSMTP.

The protein belongs to the PsbB/PsbC family. PsbC subfamily. In terms of assembly, PSII is composed of 1 copy each of membrane proteins PsbA, PsbB, PsbC, PsbD, PsbE, PsbF, PsbH, PsbI, PsbJ, PsbK, PsbL, PsbM, PsbT, PsbX, PsbY, PsbZ, Psb30/Ycf12, at least 3 peripheral proteins of the oxygen-evolving complex and a large number of cofactors. It forms dimeric complexes. Requires Binds multiple chlorophylls and provides some of the ligands for the Ca-4Mn-5O cluster of the oxygen-evolving complex. It may also provide a ligand for a Cl- that is required for oxygen evolution. PSII binds additional chlorophylls, carotenoids and specific lipids. as cofactor.

It is found in the plastid. The protein resides in the chloroplast thylakoid membrane. One of the components of the core complex of photosystem II (PSII). It binds chlorophyll and helps catalyze the primary light-induced photochemical processes of PSII. PSII is a light-driven water:plastoquinone oxidoreductase, using light energy to abstract electrons from H(2)O, generating O(2) and a proton gradient subsequently used for ATP formation. In Drimys granadensis, this protein is Photosystem II CP43 reaction center protein.